Here is a 222-residue protein sequence, read N- to C-terminus: Cytidylate kinase (222 aa).

An ATP-binding site is contributed by 11-19; sequence GPTASGKGT.

This sequence belongs to the cytidylate kinase family. Type 1 subfamily.

The protein localises to the cytoplasm. It carries out the reaction CMP + ATP = CDP + ADP. The enzyme catalyses dCMP + ATP = dCDP + ADP. This Cupriavidus necator (strain ATCC 17699 / DSM 428 / KCTC 22496 / NCIMB 10442 / H16 / Stanier 337) (Ralstonia eutropha) protein is Cytidylate kinase.